A 216-amino-acid polypeptide reads, in one-letter code: Probable transaldolase (216 aa).

Lysine 85 functions as the Schiff-base intermediate with substrate in the catalytic mechanism.

The protein belongs to the transaldolase family. Type 3B subfamily.

The protein resides in the cytoplasm. The catalysed reaction is D-sedoheptulose 7-phosphate + D-glyceraldehyde 3-phosphate = D-erythrose 4-phosphate + beta-D-fructose 6-phosphate. It participates in carbohydrate degradation; pentose phosphate pathway; D-glyceraldehyde 3-phosphate and beta-D-fructose 6-phosphate from D-ribose 5-phosphate and D-xylulose 5-phosphate (non-oxidative stage): step 2/3. Functionally, transaldolase is important for the balance of metabolites in the pentose-phosphate pathway. This chain is Probable transaldolase, found in Dehalococcoides mccartyi (strain ATCC BAA-2266 / KCTC 15142 / 195) (Dehalococcoides ethenogenes (strain 195)).